We begin with the raw amino-acid sequence, 434 residues long: Trigger factor (434 aa).

One can recognise a PPIase FKBP-type domain in the interval 161 to 246 (EDRATIDFSG…LKKVEERELP (86 aa)).

The protein belongs to the FKBP-type PPIase family. Tig subfamily.

The protein resides in the cytoplasm. The enzyme catalyses [protein]-peptidylproline (omega=180) = [protein]-peptidylproline (omega=0). Functionally, involved in protein export. Acts as a chaperone by maintaining the newly synthesized protein in an open conformation. Functions as a peptidyl-prolyl cis-trans isomerase. The protein is Trigger factor of Erwinia tasmaniensis (strain DSM 17950 / CFBP 7177 / CIP 109463 / NCPPB 4357 / Et1/99).